The following is a 277-amino-acid chain: Shikimate dehydrogenase (NADP(+)) (277 aa).

Shikimate contacts are provided by residues 15 to 17 (SKS) and T64. K68 functions as the Proton acceptor in the catalytic mechanism. Shikimate-binding residues include N89 and D104. NADP(+)-binding positions include 129–133 (GAGGA), 153–158 (NRTAKR), and M217. Shikimate is bound at residue Y219. NADP(+) is bound at residue G242.

The protein belongs to the shikimate dehydrogenase family. In terms of assembly, homodimer.

The enzyme catalyses shikimate + NADP(+) = 3-dehydroshikimate + NADPH + H(+). It participates in metabolic intermediate biosynthesis; chorismate biosynthesis; chorismate from D-erythrose 4-phosphate and phosphoenolpyruvate: step 4/7. Its function is as follows. Involved in the biosynthesis of the chorismate, which leads to the biosynthesis of aromatic amino acids. Catalyzes the reversible NADPH linked reduction of 3-dehydroshikimate (DHSA) to yield shikimate (SA). The protein is Shikimate dehydrogenase (NADP(+)) of Hydrogenovibrio crunogenus (strain DSM 25203 / XCL-2) (Thiomicrospira crunogena).